The sequence spans 134 residues: Acyl carrier protein, chloroplastic (134 aa).

Residues 1–51 (MATTFSASVSTLATSLATPTRISFQKPALVSRTNLSFNLRRSIPTRLSVSC) constitute a chloroplast transit peptide. One can recognise a Carrier domain in the interval 55-130 (PETIEKVSKI…EAAELIEELV (76 aa)). Residue Ser90 is modified to O-(pantetheine 4'-phosphoryl)serine.

It belongs to the acyl carrier protein (ACP) family. In terms of processing, 4'-phosphopantetheine is transferred from CoA to a specific serine of apo-ACP by acpS. This modification is essential for activity because fatty acids are bound in thioester linkage to the sulfhydryl of the prosthetic group. As to expression, seed.

The protein localises to the plastid. It is found in the chloroplast. The protein operates within lipid metabolism; fatty acid biosynthesis. Its function is as follows. Carrier of the growing fatty acid chain in fatty acid biosynthesis. In Brassica napus (Rape), this protein is Acyl carrier protein, chloroplastic (ACL1.A3).